A 635-amino-acid polypeptide reads, in one-letter code: Probable serine/threonine-protein kinase DDB_G0270146 (635 aa).

In terms of domain architecture, Protein kinase spans V77–I329. Residues I83–V91 and K106 each bind ATP. The active-site Proton acceptor is D199. Residues S360–D392 show a composition bias toward low complexity. A disordered region spans residues S360–V405. 2 coiled-coil regions span residues I417–E456 and K536–S585. Residues E540 to K582 are compositionally biased toward basic and acidic residues. Positions E540–E635 are disordered. Residues D583–P598 show a composition bias toward low complexity. Residues G626–E635 show a composition bias toward polar residues.

It belongs to the protein kinase superfamily. STE Ser/Thr protein kinase family. It depends on Mg(2+) as a cofactor.

The enzyme catalyses L-seryl-[protein] + ATP = O-phospho-L-seryl-[protein] + ADP + H(+). It carries out the reaction L-threonyl-[protein] + ATP = O-phospho-L-threonyl-[protein] + ADP + H(+). This Dictyostelium discoideum (Social amoeba) protein is Probable serine/threonine-protein kinase DDB_G0270146.